The following is a 651-amino-acid chain: Mitogen-activated protein kinase kinase kinase 2 (651 aa).

Residues 68 to 330 (WRKGQLIGRG…ASELLKHPFV (263 aa)) enclose the Protein kinase domain. Residues 74–82 (IGRGAFGTV) and Lys-97 contribute to the ATP site. Positions 105-130 (CASKEKTQAHIQELEEEVKLLKNLSH) form a coiled coil. Residues Lys-108 and Lys-110 each participate in a glycyl lysine isopeptide (Lys-Gly) (interchain with G-Cter in ubiquitin) cross-link. Asp-196 (proton acceptor) is an active-site residue. 3 disordered regions span residues 460–483 (GNGE…DENE), 537–601 (RGFL…VALS), and 618–651 (KRRE…SPGK). Residues 464-477 (TETKVSMEVDHPSY) are compositionally biased toward basic and acidic residues. The span at 570 to 599 (SPESGNSSGAPKNSNASAGAEQESNSQSVA) shows a compositional bias: polar residues. A coiled-coil region spans residues 605–628 (RKWKEELDQELERKRREITRQAGM).

It belongs to the protein kinase superfamily. STE Ser/Thr protein kinase family. MAP kinase kinase kinase subfamily. As to expression, expressed in roots and flowers.

It is found in the cytoplasm. Its subcellular location is the cytoskeleton. The catalysed reaction is L-seryl-[protein] + ATP = O-phospho-L-seryl-[protein] + ADP + H(+). It catalyses the reaction L-threonyl-[protein] + ATP = O-phospho-L-threonyl-[protein] + ADP + H(+). In terms of biological role, involved in cortical microtubules organization and stabilization by regulating the phosphorylation state of microtubule-associated proteins such as MAP65-1. The sequence is that of Mitogen-activated protein kinase kinase kinase 2 (ANP2) from Arabidopsis thaliana (Mouse-ear cress).